The sequence spans 367 residues: Glutamate 5-kinase (367 aa).

Lysine 10 is a binding site for ATP. Serine 50, aspartate 137, and asparagine 149 together coordinate substrate. ATP contacts are provided by residues 169 to 170 and 211 to 217; these read TD and TGGMGTK. Residues 275–353 enclose the PUA domain; it reads AGEITVDDGA…QEISEILGYE (79 aa).

It belongs to the glutamate 5-kinase family.

The protein resides in the cytoplasm. It catalyses the reaction L-glutamate + ATP = L-glutamyl 5-phosphate + ADP. The protein operates within amino-acid biosynthesis; L-proline biosynthesis; L-glutamate 5-semialdehyde from L-glutamate: step 1/2. With respect to regulation, proline-mediated feedback inhibition. In terms of biological role, catalyzes the transfer of a phosphate group to glutamate to form L-glutamate 5-phosphate. This is Glutamate 5-kinase from Serratia marcescens.